The primary structure comprises 93 residues: Small ribosomal subunit protein uS19 (93 aa).

It belongs to the universal ribosomal protein uS19 family.

Functionally, protein S19 forms a complex with S13 that binds strongly to the 16S ribosomal RNA. The sequence is that of Small ribosomal subunit protein uS19 from Alkaliphilus oremlandii (strain OhILAs) (Clostridium oremlandii (strain OhILAs)).